Reading from the N-terminus, the 177-residue chain is Peptide methionine sulfoxide reductase MsrA (177 aa).

The active site involves Cys-10.

Belongs to the MsrA Met sulfoxide reductase family.

It carries out the reaction L-methionyl-[protein] + [thioredoxin]-disulfide + H2O = L-methionyl-(S)-S-oxide-[protein] + [thioredoxin]-dithiol. The catalysed reaction is [thioredoxin]-disulfide + L-methionine + H2O = L-methionine (S)-S-oxide + [thioredoxin]-dithiol. Functionally, has an important function as a repair enzyme for proteins that have been inactivated by oxidation. Catalyzes the reversible oxidation-reduction of methionine sulfoxide in proteins to methionine. The sequence is that of Peptide methionine sulfoxide reductase MsrA from Saccharolobus solfataricus (strain ATCC 35092 / DSM 1617 / JCM 11322 / P2) (Sulfolobus solfataricus).